The primary structure comprises 256 residues: DNA repair protein RecO (256 aa).

It belongs to the RecO family.

In terms of biological role, involved in DNA repair and RecF pathway recombination. The polypeptide is DNA repair protein RecO (Rhizobium leguminosarum bv. trifolii (strain WSM2304)).